A 318-amino-acid chain; its full sequence is Aspartate carbamoyltransferase catalytic subunit (318 aa).

Residues arginine 59 and threonine 60 each contribute to the carbamoyl phosphate site. An L-aspartate-binding site is contributed by lysine 87. Carbamoyl phosphate is bound by residues arginine 109, histidine 137, and glutamine 140. Positions 170 and 224 each coordinate L-aspartate. The carbamoyl phosphate site is built by glycine 265 and proline 266.

This sequence belongs to the aspartate/ornithine carbamoyltransferase superfamily. ATCase family. In terms of assembly, heterododecamer (2C3:3R2) of six catalytic PyrB chains organized as two trimers (C3), and six regulatory PyrI chains organized as three dimers (R2).

It catalyses the reaction carbamoyl phosphate + L-aspartate = N-carbamoyl-L-aspartate + phosphate + H(+). It participates in pyrimidine metabolism; UMP biosynthesis via de novo pathway; (S)-dihydroorotate from bicarbonate: step 2/3. Its function is as follows. Catalyzes the condensation of carbamoyl phosphate and aspartate to form carbamoyl aspartate and inorganic phosphate, the committed step in the de novo pyrimidine nucleotide biosynthesis pathway. The polypeptide is Aspartate carbamoyltransferase catalytic subunit (Rhizobium rhizogenes (strain K84 / ATCC BAA-868) (Agrobacterium radiobacter)).